The primary structure comprises 168 residues: Endoribonuclease YbeY (168 aa).

Residues histidine 126, histidine 130, and histidine 136 each contribute to the Zn(2+) site.

The protein belongs to the endoribonuclease YbeY family. It depends on Zn(2+) as a cofactor.

The protein resides in the cytoplasm. Single strand-specific metallo-endoribonuclease involved in late-stage 70S ribosome quality control and in maturation of the 3' terminus of the 16S rRNA. This chain is Endoribonuclease YbeY, found in Agrobacterium fabrum (strain C58 / ATCC 33970) (Agrobacterium tumefaciens (strain C58)).